Consider the following 134-residue polypeptide: Large ribosomal subunit protein uL22 (134 aa).

Belongs to the universal ribosomal protein uL22 family. In terms of assembly, part of the 50S ribosomal subunit.

In terms of biological role, this protein binds specifically to 23S rRNA; its binding is stimulated by other ribosomal proteins, e.g. L4, L17, and L20. It is important during the early stages of 50S assembly. It makes multiple contacts with different domains of the 23S rRNA in the assembled 50S subunit and ribosome. The globular domain of the protein is located near the polypeptide exit tunnel on the outside of the subunit, while an extended beta-hairpin is found that lines the wall of the exit tunnel in the center of the 70S ribosome. The protein is Large ribosomal subunit protein uL22 of Rhodococcus erythropolis (strain PR4 / NBRC 100887).